Reading from the N-terminus, the 426-residue chain is C4-dicarboxylate transport protein (426 aa).

The next 8 helical transmembrane spans lie at 4 to 24 (SIFT…ILLG), 44 to 64 (LIKM…IAGM), 76 to 96 (IALL…LVVV), 142 to 162 (IGAF…MFGF), 184 to 204 (VIFG…FGAM), 222 to 242 (LILC…GSIA), 326 to 346 (IWHQ…AAGV), and 352 to 372 (IVLA…LALI).

This sequence belongs to the dicarboxylate/amino acid:cation symporter (DAACS) (TC 2.A.23) family.

The protein resides in the cell inner membrane. Its function is as follows. Responsible for the transport of dicarboxylates such as succinate, fumarate, and malate from the periplasm across the membrane. This is C4-dicarboxylate transport protein from Edwardsiella ictaluri (strain 93-146).